Here is an 891-residue protein sequence, read N- to C-terminus: Alanine--tRNA ligase (891 aa).

Residues His564, His568, Cys678, and His682 each contribute to the Zn(2+) site.

This sequence belongs to the class-II aminoacyl-tRNA synthetase family. Requires Zn(2+) as cofactor.

It localises to the cytoplasm. It carries out the reaction tRNA(Ala) + L-alanine + ATP = L-alanyl-tRNA(Ala) + AMP + diphosphate. Functionally, catalyzes the attachment of alanine to tRNA(Ala) in a two-step reaction: alanine is first activated by ATP to form Ala-AMP and then transferred to the acceptor end of tRNA(Ala). Also edits incorrectly charged Ser-tRNA(Ala) and Gly-tRNA(Ala) via its editing domain. This chain is Alanine--tRNA ligase, found in Nitrobacter hamburgensis (strain DSM 10229 / NCIMB 13809 / X14).